The primary structure comprises 313 residues: ADP-L-glycero-D-manno-heptose-6-epimerase (313 aa).

NADP(+)-binding positions include 10 to 11, 31 to 32, K38, R53, 75 to 79, and N92; these read MI, DN, and EGACS. The active-site Proton acceptor is the Y139. K143 is an NADP(+) binding site. Position 174 (N174) interacts with substrate. V175 and K183 together coordinate NADP(+). K183 acts as the Proton acceptor in catalysis. Residues S185, H192, 206-209, R214, and Y277 each bind substrate; that span reads FAGS.

It belongs to the NAD(P)-dependent epimerase/dehydratase family. HldD subfamily. As to quaternary structure, homopentamer. Requires NADP(+) as cofactor.

It catalyses the reaction ADP-D-glycero-beta-D-manno-heptose = ADP-L-glycero-beta-D-manno-heptose. The protein operates within nucleotide-sugar biosynthesis; ADP-L-glycero-beta-D-manno-heptose biosynthesis; ADP-L-glycero-beta-D-manno-heptose from D-glycero-beta-D-manno-heptose 7-phosphate: step 4/4. It functions in the pathway bacterial outer membrane biogenesis; LPS core biosynthesis. In terms of biological role, catalyzes the interconversion between ADP-D-glycero-beta-D-manno-heptose and ADP-L-glycero-beta-D-manno-heptose via an epimerization at carbon 6 of the heptose. The chain is ADP-L-glycero-D-manno-heptose-6-epimerase from Vibrio vulnificus (strain YJ016).